A 142-amino-acid polypeptide reads, in one-letter code: Neuritin (142 aa).

The signal sequence occupies residues M1 to A27. A lipid anchor (GPI-anchor amidated glycine) is attached at G116. The propeptide at A117–F142 is removed in mature form.

The protein belongs to the neuritin family. As to quaternary structure, component of the outer core of AMPAR complex. AMPAR complex consists of an inner core made of 4 pore-forming GluA/GRIA proteins (GRIA1, GRIA2, GRIA3 and GRIA4) and 4 major auxiliary subunits arranged in a twofold symmetry. One of the two pairs of distinct binding sites is occupied either by CNIH2, CNIH3 or CACNG2, CACNG3. The other harbors CACNG2, CACNG3, CACNG4, CACNG8 or GSG1L. This inner core of AMPAR complex is complemented by outer core constituents binding directly to the GluA/GRIA proteins at sites distinct from the interaction sites of the inner core constituents. Outer core constituents include at least PRRT1, PRRT2, CKAMP44/SHISA9, FRRS1L and NRN1. The proteins of the inner and outer core serve as a platform for other, more peripherally associated AMPAR constituents. Alone or in combination, these auxiliary subunits control the gating and pharmacology of the AMPAR complex and profoundly impact their biogenesis and protein processing.

Its subcellular location is the cell membrane. It is found in the synapse. Functionally, promotes neurite outgrowth and especially branching of neuritic processes in primary hippocampal and cortical cells. This is Neuritin (NRN1) from Bos taurus (Bovine).